The primary structure comprises 224 residues: Large ribosomal subunit protein uL3 (224 aa).

Gln159 is modified (N5-methylglutamine).

It belongs to the universal ribosomal protein uL3 family. As to quaternary structure, part of the 50S ribosomal subunit. Forms a cluster with proteins L14 and L19. Methylated by PrmB.

Its function is as follows. One of the primary rRNA binding proteins, it binds directly near the 3'-end of the 23S rRNA, where it nucleates assembly of the 50S subunit. This is Large ribosomal subunit protein uL3 from Herminiimonas arsenicoxydans.